The following is a 633-amino-acid chain: MTSQTPQSGEIDDASAAPAQSLAGAKLIADYVRNLPPKPGVYRMFGEDGAVLYVGKARNLKNRVSNYANGRGHSNRIALMIGLTRKMEFVVTQTETEALLLEANLIKSLKPRFNILLRDDKSFPYILIRKDHPAAQLTKHRGARKAKGDYFGPFASVGAVNQTLNTLQKAFLVRTCSDSVYEGRSRACMLHQIKRCAGPCVDLIDPAAYDELVGQATDFLRGRSNALREDLQTRMAQASEAMDFETAAKLRDRIRAIAAVTTDQGINPDGVEEADVVAVHSDGGKSCVQVFFFRAGQNWGNQSFFPRHDMEAEPAEVLAAFIAQFYDDKPAPALILLSHEIEEAELLGEALSLRTERKVSLHTPRRGEKRKLVDRTLTNAREALARRMAESASQTQLLKGVQRVFDLTDLPQRIEVYDNSHIQGTNALGAMIVAGPEGFEKNHYRRFNMKGDDAATNDDFAMMKAMLKRRFSRLLKERDDGAPVPDLVLIDGGKGQLSSVMEIAEELGITDETGITIAAIAKGPERDAGREAFYLPGKPPFKLPMKDPVLYYLQRLRDEAHRFAIGGHRAKRKKQMTDNPLDGIDGIGPSRKKALLAHFGSAKAVRNAALADLEAVDGISRAMARKIHDWFQK.

Positions 37–115 (PKPGVYRMFG…IKSLKPRFNI (79 aa)) constitute a GIY-YIG domain. In terms of domain architecture, UVR spans 225–260 (NALREDLQTRMAQASEAMDFETAAKLRDRIRAIAAV).

Belongs to the UvrC family. As to quaternary structure, interacts with UvrB in an incision complex.

The protein resides in the cytoplasm. Functionally, the UvrABC repair system catalyzes the recognition and processing of DNA lesions. UvrC both incises the 5' and 3' sides of the lesion. The N-terminal half is responsible for the 3' incision and the C-terminal half is responsible for the 5' incision. This chain is UvrABC system protein C, found in Maricaulis maris (strain MCS10) (Caulobacter maris).